Here is a 179-residue protein sequence, read N- to C-terminus: Large ribosomal subunit protein uL6 (179 aa).

This sequence belongs to the universal ribosomal protein uL6 family. In terms of assembly, part of the 50S ribosomal subunit.

In terms of biological role, this protein binds to the 23S rRNA, and is important in its secondary structure. It is located near the subunit interface in the base of the L7/L12 stalk, and near the tRNA binding site of the peptidyltransferase center. The protein is Large ribosomal subunit protein uL6 of Saccharopolyspora erythraea (strain ATCC 11635 / DSM 40517 / JCM 4748 / NBRC 13426 / NCIMB 8594 / NRRL 2338).